We begin with the raw amino-acid sequence, 445 residues long: Phosphoglucosamine mutase (445 aa).

Residue serine 102 is the Phosphoserine intermediate of the active site. 4 residues coordinate Mg(2+): serine 102, aspartate 241, aspartate 243, and aspartate 245. Serine 102 bears the Phosphoserine mark.

This sequence belongs to the phosphohexose mutase family. The cofactor is Mg(2+). In terms of processing, activated by phosphorylation.

It catalyses the reaction alpha-D-glucosamine 1-phosphate = D-glucosamine 6-phosphate. Catalyzes the conversion of glucosamine-6-phosphate to glucosamine-1-phosphate. The polypeptide is Phosphoglucosamine mutase (Escherichia coli O139:H28 (strain E24377A / ETEC)).